A 237-amino-acid polypeptide reads, in one-letter code: Glutathione S-transferase psoE (237 aa).

Positions 2–79 (VFGTLYTFPG…YITSQNEQTT (78 aa)) constitute a GST N-terminal domain. Residues arginine 37, lysine 49, valine 50, glutamate 63, cysteine 64, and asparagine 99 each coordinate glutathione. Residue lysine 49 coordinates substrate. The GST C-terminal domain maps to 84–222 (DKKEYAEIIK…NNPPEKKPET (139 aa)). Glutamine 108 provides a ligand contact to substrate. Residues 208–222 (EPKLTNNPPEKKPET) show a composition bias toward basic and acidic residues. The tract at residues 208-237 (EPKLTNNPPEKKPETVPKNGAAVAIEATQA) is disordered.

It belongs to the GST superfamily. It depends on glutathione as a cofactor.

Its pathway is secondary metabolite biosynthesis. Glutathione S-transferase; part of the gene cluster that mediates the biosynthesis of pseurotin A, a competitive inhibitor of chitin synthase and an inducer of nerve-cell proliferation. The PKS-NRPS hybrid synthetase psoA is responsible for the biosynthesis of azaspirene, one of the first intermediates having the 1-oxa-7-azaspiro[4,4]-non-2-ene-4,6-dione core of pseurotin, via condensation of one acetyl-CoA, 4 malonyl-CoA, and a L-phenylalanine molecule. The dual-functional monooxygenase/methyltransferase psoF seems to be involved in the addition of the C3 methyl group onto the pseurotin scaffold. Azaspirene is then converted to synerazol through 4 steps including oxidation of C17 by the cytochrome P450 monooxygenase psoD, O-methylation of the hydroxy group of C8 by the methyltransferase psoC, and the trans-to-cis isomerization of the C13 olefin by the glutathione S-transferase psoE. The fourth step of synerazol production is performed by the dual-functional monooxygenase/methyltransferase psoF which seems to catalyze the epoxidation of the intermediate deepoxy-synerazol. Synerazol can be attacked by a water molecule nonenzymatically at two different positions to yield two diol products, pseurotin A and pseurotin D. The protein is Glutathione S-transferase psoE of Aspergillus fumigatus (strain ATCC MYA-4609 / CBS 101355 / FGSC A1100 / Af293) (Neosartorya fumigata).